The following is a 302-amino-acid chain: Tritrans,polycis-undecaprenyl-diphosphate synthase (geranylgeranyl-diphosphate specific) (302 aa).

The active site involves aspartate 33. Residue aspartate 33 coordinates Mg(2+). Substrate-binding positions include 34–37 (GNRR) and 78–80 (STE). Asparagine 81 serves as the catalytic Proton acceptor. Residues phenylalanine 82, arginine 84, arginine 203, and 209-211 (RTS) contribute to the substrate site.

It belongs to the UPP synthase family. In terms of assembly, homodimer. It depends on Mg(2+) as a cofactor.

The catalysed reaction is geranylgeranyl diphosphate + 7 isopentenyl diphosphate = tri-trans,hepta-cis-undecaprenyl diphosphate + 7 diphosphate. In terms of biological role, catalyzes the sequential condensation of isopentenyl diphosphate (IPP) with geranylgeranyl diphosphate (GGPP) to yield (2Z,6Z,10Z,14Z,18Z,22Z,26Z,30E,34E,38E)-undecaprenyl diphosphate (tritrans,heptacis-UPP). It is probably the precursor of glycosyl carrier lipids. This is Tritrans,polycis-undecaprenyl-diphosphate synthase (geranylgeranyl-diphosphate specific) from Halobacterium salinarum (strain ATCC 700922 / JCM 11081 / NRC-1) (Halobacterium halobium).